Reading from the N-terminus, the 205-residue chain is Peptidyl-tRNA hydrolase (205 aa).

TRNA is bound at residue Tyr17. His22 functions as the Proton acceptor in the catalytic mechanism. Positions 73 and 75 each coordinate tRNA.

Belongs to the PTH family. Monomer.

The protein localises to the cytoplasm. It catalyses the reaction an N-acyl-L-alpha-aminoacyl-tRNA + H2O = an N-acyl-L-amino acid + a tRNA + H(+). Hydrolyzes ribosome-free peptidyl-tRNAs (with 1 or more amino acids incorporated), which drop off the ribosome during protein synthesis, or as a result of ribosome stalling. In terms of biological role, catalyzes the release of premature peptidyl moieties from peptidyl-tRNA molecules trapped in stalled 50S ribosomal subunits, and thus maintains levels of free tRNAs and 50S ribosomes. The protein is Peptidyl-tRNA hydrolase of Maridesulfovibrio salexigens (strain ATCC 14822 / DSM 2638 / NCIMB 8403 / VKM B-1763) (Desulfovibrio salexigens).